The chain runs to 150 residues: Urease accessory protein UreE (150 aa).

The protein belongs to the UreE family.

It is found in the cytoplasm. Functionally, involved in urease metallocenter assembly. Binds nickel. Probably functions as a nickel donor during metallocenter assembly. This chain is Urease accessory protein UreE, found in Staphylococcus saprophyticus subsp. saprophyticus (strain ATCC 15305 / DSM 20229 / NCIMB 8711 / NCTC 7292 / S-41).